The sequence spans 563 residues: Endogenous retroviral envelope protein HEMO (563 aa).

A signal peptide spans 1-26 (MGSLSNYALLQLTLTAFLTILVQPQH). Topologically, residues 27-488 (LLAPVFRTLS…IFAKVGDWFR (462 aa)) are extracellular. Asn-122 and Asn-192 each carry an N-linked (GlcNAc...) asparagine glycan. The helical transmembrane segment at 489-509 (SWGYVLLIVLFCLFIFVLIYV) threads the bilayer. Residues 510–563 (RVFRKSRRSLNSQPLNLALSPQQSAQLLVSETSCQVSNRAMKGLTTHQYDTSLL) lie on the Cytoplasmic side of the membrane.

It belongs to the gamma type-C retroviral envelope protein family. In terms of processing, N-glycosylated. Cleaved by some metalloproteinase at 432-Gln-Arg-433 (mainly) or 433-Arg-Gln-434, leading to release the secreted form (Endogenous retroviral envelope protein HEMO, secreted form) in the extracellular medium. As to expression, expressed at high level in the placenta and stem cells (at protein level). Also expressed in the kidney but at a lower level. Endogenous retroviral envelope protein HEMO, secreted form: Present in the blood of pregnant women (at protein level).

The protein resides in the cell membrane. Its subcellular location is the secreted. Endogenous envelope proteins originate from retroviral envelope proteins, which mediate receptor recognition and membrane fusion during early infection. Endogenous envelope proteins may have kept, lost or modified their original function during evolution. In Homo sapiens (Human), this protein is Endogenous retroviral envelope protein HEMO.